Reading from the N-terminus, the 429-residue chain is Arsenical pump membrane protein (429 aa).

Helical transmembrane passes span 24-44 (IGWS…IHIA), 46-66 (IPVV…VIII), 98-118 (IVLL…ALIL), 121-141 (IVIA…AFVM), 178-198 (VMVP…HLFF), 228-248 (WVVL…GIPV), 249-269 (SAIA…GHGI), 274-294 (VLRG…LVIY), 316-335 (GLWA…SSIM), and 407-427 (IVMT…RLSV).

The protein resides in the cell inner membrane. Functionally, involved in arsenical resistance. Thought to form the channel of an arsenite pump. This chain is Arsenical pump membrane protein (arsB), found in Escherichia coli.